A 65-amino-acid polypeptide reads, in one-letter code: Alpha-conotoxine-like Am1.5 (65 aa).

Positions 1 to 21 (MGMRMMFTVFLLVVLATTVVS) are cleaved as a signal peptide. A propeptide spanning residues 22–46 (FMSGRAFRDRNAAAKVSDLIALKAR) is cleaved from the precursor. Glutamate 49 carries the 4-carboxyglutamate modification. The segment at 52-54 (SHP) is ser-Xaa-Pro motif, crucial for potent interaction with nAChR. A 4-hydroxyproline mark is found at proline 54 and proline 61. A 4-carboxyglutamate modification is found at glutamate 62.

Belongs to the conotoxin A superfamily. In terms of processing, contains 2 disulfide bonds. Expressed by the venom duct.

It is found in the secreted. Functionally, alpha-conotoxins act on postsynaptic membranes, they bind to the nicotinic acetylcholine receptors (nAChR) and thus inhibit them. The sequence is that of Alpha-conotoxine-like Am1.5 from Conus amadis (Amadis cone).